The primary structure comprises 3302 residues: Xin actin-binding repeat-containing protein 2 (3302 aa).

A disordered region spans residues 166–204; sequence NDSEETLKPSSAMGTSSYTSARQSKETSTSSYSNHSLTS. Residues 173 to 187 are compositionally biased toward polar residues; the sequence is KPSSAMGTSSYTSAR. The segment covering 191 to 204 has biased composition (low complexity); sequence ETSTSSYSNHSLTS. Xin repeat units follow at residues 306-321, 341-356, 381-396, 418-433, 456-471, 496-511, and 534-549; these read AGVQQARYVFENTNDS, GEVQSIRWIFENQPLD, GDVKYTTWMFETQPID, GDVCTARWMFETRPLD, GDVKTVRYMFETQQLD, GNVKRSIKCFETQPLY, and GDVRTARWMFETQPLD. Phosphoserine is present on Ser565. Xin repeat units lie at residues 572–587 and 606–621; these read GEVGRARWLFETQPLE and IDVSKKCWMFETQPLD. The residue at position 633 (Ser633) is a Phosphoserine. Xin repeat units lie at residues 640 to 655, 677 to 692, 713 to 728, 744 to 759, and 782 to 797; these read GDVKTTKHLLETLPIE, GDVKHQKWVFETQRLE, GHVKNYTHIFESNNLI, GTVELNKSLFETTPLY, and GDVRSCRWLFETRPID. Ser813 carries the post-translational modification Phosphoserine. Xin repeat units lie at residues 820–835, 859–874, 892–907, 930–945, 965–980, 1004–1019, 1040–1055, 1077–1092, 1115–1130, 1152–1167, and 1186–1201; these read GNVKSARWLFETQPLD, GDVKTCKWLFETQPME, GDVRTCMWLFETQPLD, GDVRTACLLFETENLD, GDVSGMKYKFENQSLD, GNVLNCRWLFENQPID, GDVRKGCFIFETFSLD, GDVKSYKMLFETQPLY, GDVRGTRWLFETKPLD, GDVSSVRYRFETQPLD, and GNVQMNKQLFESEGGD. Ser1210 carries the post-translational modification Phosphoserine. 3 Xin repeats span residues 1217-1232, 1254-1269, and 1289-1304; these read GNVKTSTWLFETHSID, GDVKQAVWLFENQTLD, and SDVKTTTWLFETTPIH. Ser1573 bears the Phosphoserine mark. Disordered stretches follow at residues 1848–1882, 1920–1939, 1957–2002, 2039–2296, 2311–2378, 2546–2593, and 2626–2687; these read VSASMSRKKSLKTKESENVRESKDDVSSTQSVDKT, AETQSYRPDPTQHPVSNPAG, EKQN…APDK, YPDC…KPYM, RQQR…SKAV, YAAK…ESRV, and NFQQ…RESQ. Over residues 1859–1873 the composition is skewed to basic and acidic residues; sequence KTKESENVRESKDDV. The residue at position 1930 (Thr1930) is a Phosphothreonine. Phosphoserine is present on Ser1935. The span at 1957–1969 shows a compositional bias: basic and acidic residues; it reads EKQNSNKDMRKND. Composition is skewed to pro residues over residues 2051–2062 and 2125–2134; these read LPPPSPPPPPPS and SLPPPPPTAP. A compositionally biased stretch (low complexity) spans 2135–2145; that stretch reads SQPAHLLSSSV. Position 2158 is a phosphoserine (Ser2158). A compositionally biased stretch (basic and acidic residues) spans 2158–2167; it reads SRKETLDSHQ. An interacts with NEBL region spans residues 2181–2186; sequence PPTLPK. A phosphoserine mark is found at Ser2198, Ser2211, and Ser2252. Residues 2205 to 2243 show a composition bias toward basic and acidic residues; the sequence is ELERSLSDVEIKTTLSKDQKSSLVAESREHTEAKQEVFR. Composition is skewed to polar residues over residues 2251 to 2263 and 2282 to 2292; these read LSISSANSLSQTV and SFPSGSEQQSP. Residues 2303–2328 adopt a coiled-coil conformation; that stretch reads LMIAEEKYRQQREELEKQRRESSCHS. 2 stretches are compositionally biased toward basic and acidic residues: residues 2311–2325 and 2333–2350; these read RQQREELEKQRRESS and ETQHRSLSEKEKETELQK. Residues 2626–2635 are compositionally biased toward polar residues; it reads NFQQTQTQTS. A compositionally biased stretch (basic and acidic residues) spans 2636 to 2659; sequence RIEHKELSQPYSEKKCLRDKDKQQ. The span at 2674–2685 shows a compositional bias: polar residues; sequence TQKQSSFSSVRE. 2 coiled-coil regions span residues 2696-2724 and 2751-2777; these read NILEFLRKREELQQILSRVKQFEADSNKS and RVAMENNLEKVKEEIIHIKTQAEEMLV. The interval 2835 to 2934 is disordered; the sequence is RQVATHSEAA…PSPPRSRSEQ (100 aa). Composition is skewed to polar residues over residues 2836 to 2850 and 2891 to 2903; these read QVATHSEAATHNPAK and KSELSQSPKNNSC. Over residues 2907 to 2916 the composition is skewed to basic and acidic residues; the sequence is LPRRPMEHTS. Phosphoserine is present on residues Ser2987 and Ser3225. Positions 3278-3302 are disordered; that stretch reads QGNLHNLSKDGLSNGVPRSRPAEFS.

This sequence belongs to the Xin family. As to quaternary structure, interacts with ACTN2. Interacts with F-actin. Interacts with NEBL (via SH3 domain). Interacts with Kcna5/Kv1.5 and Scn5a/Nav1.5; the interactions are required for normal action potential configuration in the heart.

The protein resides in the cell junction. In terms of biological role, protects actin filaments from depolymerization. Required for correct morphology of cell membranes and maturation of intercalated disks of cardiomyocytes via facilitating localization of XIRP1 and CDH2 to the termini of aligned mature cardiomyocytes. Thereby required for correct postnatal heart development and growth regulation that is crucial for overall heart morphology and diastolic function. Required for normal electrical conduction in the heart including formation of the infranodal ventricular conduction system and normal action potential configuration, as a result of its interaction with the cardiac ion channel components Scn5a/Nav1.5 and Kcna5/Kv1.5. Required for regular actin filament spacing of the paracrystalline array in both inner and outer hair cells of the cochlea, thereby required for maintenance of stereocilia morphology. The polypeptide is Xin actin-binding repeat-containing protein 2 (Rattus norvegicus (Rat)).